A 142-amino-acid polypeptide reads, in one-letter code: ATP synthase epsilon chain (142 aa).

This sequence belongs to the ATPase epsilon chain family. In terms of assembly, F-type ATPases have 2 components, CF(1) - the catalytic core - and CF(0) - the membrane proton channel. CF(1) has five subunits: alpha(3), beta(3), gamma(1), delta(1), epsilon(1). CF(0) has three main subunits: a, b and c.

The protein localises to the cell inner membrane. Produces ATP from ADP in the presence of a proton gradient across the membrane. The protein is ATP synthase epsilon chain of Histophilus somni (strain 129Pt) (Haemophilus somnus).